We begin with the raw amino-acid sequence, 397 residues long: Acetate kinase 2 (397 aa).

Asn10 is a binding site for Mg(2+). Lys17 serves as a coordination point for ATP. Arg90 is a substrate binding site. Asp147 functions as the Proton donor/acceptor in the catalytic mechanism. ATP-binding positions include 207-211 (HLGNG), 281-283 (DCR), and 329-333 (GIGEN). Glu383 contributes to the Mg(2+) binding site.

This sequence belongs to the acetokinase family. As to quaternary structure, homodimer. Requires Mg(2+) as cofactor. Mn(2+) serves as cofactor.

Its subcellular location is the cytoplasm. It carries out the reaction acetate + ATP = acetyl phosphate + ADP. It functions in the pathway metabolic intermediate biosynthesis; acetyl-CoA biosynthesis; acetyl-CoA from acetate: step 1/2. Catalyzes the formation of acetyl phosphate from acetate and ATP. Can also catalyze the reverse reaction. This Photobacterium profundum (strain SS9) protein is Acetate kinase 2.